The following is a 291-amino-acid chain: 33 kDa chaperonin (291 aa).

2 disulfides stabilise this stretch: Cys235/Cys237 and Cys268/Cys271.

The protein belongs to the HSP33 family. Post-translationally, under oxidizing conditions two disulfide bonds are formed involving the reactive cysteines. Under reducing conditions zinc is bound to the reactive cysteines and the protein is inactive.

Its subcellular location is the cytoplasm. Functionally, redox regulated molecular chaperone. Protects both thermally unfolding and oxidatively damaged proteins from irreversible aggregation. Plays an important role in the bacterial defense system toward oxidative stress. In Bacillus velezensis (strain DSM 23117 / BGSC 10A6 / LMG 26770 / FZB42) (Bacillus amyloliquefaciens subsp. plantarum), this protein is 33 kDa chaperonin.